Reading from the N-terminus, the 82-residue chain is Large ribosomal subunit protein bL31B (82 aa).

The protein belongs to the bacterial ribosomal protein bL31 family. Type B subfamily. In terms of assembly, part of the 50S ribosomal subunit.

This Pectobacterium carotovorum subsp. carotovorum (strain PC1) protein is Large ribosomal subunit protein bL31B.